The sequence spans 311 residues: UDP-N-acetylenolpyruvoylglucosamine reductase (311 aa).

One can recognise an FAD-binding PCMH-type domain in the interval 28 to 197; that stretch reads KIGGNARWLV…VSARFHLARG (170 aa). R177 is a catalytic residue. S226 acts as the Proton donor in catalysis. Residue E296 is part of the active site.

The protein belongs to the MurB family. FAD serves as cofactor.

It is found in the cytoplasm. It carries out the reaction UDP-N-acetyl-alpha-D-muramate + NADP(+) = UDP-N-acetyl-3-O-(1-carboxyvinyl)-alpha-D-glucosamine + NADPH + H(+). Its pathway is cell wall biogenesis; peptidoglycan biosynthesis. Its function is as follows. Cell wall formation. This Magnetococcus marinus (strain ATCC BAA-1437 / JCM 17883 / MC-1) protein is UDP-N-acetylenolpyruvoylglucosamine reductase.